Reading from the N-terminus, the 379-residue chain is Alcohol dehydrogenase 1 (379 aa).

Zn(2+)-binding residues include Cys47, Thr49, His69, Cys99, Cys102, Cys105, Cys113, and Cys177. An alcohol is bound by residues Thr49 and His69. Thr49 is an NAD(+) binding site. NAD(+) contacts are provided by residues 202 to 207 (GLGAVG), Asp226, Arg231, Thr272, Val295, 295 to 297 (VGV), Phe322, and Arg372.

It belongs to the zinc-containing alcohol dehydrogenase family. As to quaternary structure, homodimer. Zn(2+) is required as a cofactor.

It localises to the cytoplasm. The catalysed reaction is a primary alcohol + NAD(+) = an aldehyde + NADH + H(+). The enzyme catalyses a secondary alcohol + NAD(+) = a ketone + NADH + H(+). This is Alcohol dehydrogenase 1 (ADH1) from Zea mays (Maize).